Here is a 245-residue protein sequence, read N- to C-terminus: 1-(5-phosphoribosyl)-5-[(5-phosphoribosylamino)methylideneamino] imidazole-4-carboxamide isomerase (245 aa).

Aspartate 8 functions as the Proton acceptor in the catalytic mechanism. Residue aspartate 130 is the Proton donor of the active site.

This sequence belongs to the HisA/HisF family.

Its subcellular location is the cytoplasm. It carries out the reaction 1-(5-phospho-beta-D-ribosyl)-5-[(5-phospho-beta-D-ribosylamino)methylideneamino]imidazole-4-carboxamide = 5-[(5-phospho-1-deoxy-D-ribulos-1-ylimino)methylamino]-1-(5-phospho-beta-D-ribosyl)imidazole-4-carboxamide. The protein operates within amino-acid biosynthesis; L-histidine biosynthesis; L-histidine from 5-phospho-alpha-D-ribose 1-diphosphate: step 4/9. This is 1-(5-phosphoribosyl)-5-[(5-phosphoribosylamino)methylideneamino] imidazole-4-carboxamide isomerase from Pseudomonas putida (strain GB-1).